Here is a 339-residue protein sequence, read N- to C-terminus: Phenylalanine--tRNA ligase alpha subunit (339 aa).

A Mg(2+)-binding site is contributed by E262.

This sequence belongs to the class-II aminoacyl-tRNA synthetase family. Phe-tRNA synthetase alpha subunit type 1 subfamily. Tetramer of two alpha and two beta subunits. Mg(2+) is required as a cofactor.

Its subcellular location is the cytoplasm. It carries out the reaction tRNA(Phe) + L-phenylalanine + ATP = L-phenylalanyl-tRNA(Phe) + AMP + diphosphate + H(+). This Neisseria gonorrhoeae (strain ATCC 700825 / FA 1090) protein is Phenylalanine--tRNA ligase alpha subunit.